The sequence spans 292 residues: Probable endonuclease lcl3 (292 aa).

Residues 1 to 27 (MRWPPWSSESTNDEQKQTPSSWLSSAA) form a disordered region. Residues 17–27 (QTPSSWLSSAA) show a composition bias toward polar residues. A helical membrane pass occupies residues 45–61 (IIPTVVLTSGILIAVRF). Residues 83–250 (RSIFGQVTSV…KKRARGLWKD (168 aa)) form the TNase-like domain. Arg-134 is an active-site residue. Ca(2+) is bound at residue Asp-139. Catalysis depends on residues Glu-142 and Arg-182. The tract at residues 257–292 (GWESPREYKNRMGMGDPLPIEKGNGKGNGKGKIGQK) is disordered. Residues 281 to 292 (GKGNGKGKIGQK) show a composition bias toward gly residues.

Belongs to the LCL3 family.

It localises to the mitochondrion. It is found in the membrane. This Penicillium rubens (strain ATCC 28089 / DSM 1075 / NRRL 1951 / Wisconsin 54-1255) (Penicillium chrysogenum) protein is Probable endonuclease lcl3 (lcl3).